A 245-amino-acid chain; its full sequence is Large ribosomal subunit protein uL29m (245 aa).

2 stretches are compositionally biased toward low complexity: residues 36-49 (SFNSQRSQFSTSSS) and 234-245 (STKSETTTSKNI). 2 disordered regions span residues 36 to 98 (SFNS…NPDH) and 207 to 245 (RPSPDEVLEEETETAMPTEVMPEELDSSTKSETTTSKNI).

The protein belongs to the universal ribosomal protein uL29 family. Component of the mitochondrial large ribosomal subunit. Mature mitochondrial ribosomes consist of a small (37S) and a large (54S) subunit. The 37S subunit contains at least 33 different proteins and 1 molecule of RNA (15S). The 54S subunit contains at least 45 different proteins and 1 molecule of RNA (21S).

The protein resides in the mitochondrion. In Coccidioides immitis (strain RS) (Valley fever fungus), this protein is Large ribosomal subunit protein uL29m (MRPL4).